Here is a 580-residue protein sequence, read N- to C-terminus: Isochorismate synthase, chloroplastic (580 aa).

Residues 1-91 (MASITGHCVA…LAMERLSSAV (91 aa)) constitute a chloroplast transit peptide.

It belongs to the isochorismate synthase family. Mg(2+) serves as cofactor.

It is found in the plastid. The protein resides in the chloroplast. The enzyme catalyses chorismate = isochorismate. Not inhibited by Tyr, Phe or Trp. Functionally, involved in the synthesis of o-succinylbenzoic acid, 2,3-dihydroxybenzoic acid and salicylic acid (SA). The polypeptide is Isochorismate synthase, chloroplastic (Catharanthus roseus (Madagascar periwinkle)).